A 173-amino-acid polypeptide reads, in one-letter code: Pathogenesis-related protein 1A/1B (173 aa).

A signal peptide spans 1 to 20 (MSTSAVLFLLLAVFAAGASA).

Belongs to the thaumatin family.

This chain is Pathogenesis-related protein 1A/1B, found in Hordeum vulgare (Barley).